A 385-amino-acid chain; its full sequence is Cytochrome b (385 aa).

4 consecutive transmembrane segments (helical) span residues 32–52 (FGSL…TLAM), 76–98 (WFIR…AHMG), 113–133 (PWSI…MGYV), and 179–199 (FFAL…LHLI). Residues His82 and His96 each coordinate heme b. 2 residues coordinate heme b: His183 and His197. His202 is a binding site for a ubiquinone. The next 4 membrane-spanning stretches (helical) occupy residues 225–245 (YSFK…LFVF), 289–309 (LGGV…PIVD), 321–341 (ISKL…VLGQ), and 348–368 (FIVL…ILLP).

It belongs to the cytochrome b family. Fungal cytochrome b-c1 complex contains 10 subunits; 3 respiratory subunits, 2 core proteins and 5 low-molecular weight proteins. Cytochrome b-c1 complex is a homodimer. Requires heme b as cofactor.

The protein resides in the mitochondrion inner membrane. In terms of biological role, component of the ubiquinol-cytochrome c reductase complex (complex III or cytochrome b-c1 complex) that is part of the mitochondrial respiratory chain. The b-c1 complex mediates electron transfer from ubiquinol to cytochrome c. Contributes to the generation of a proton gradient across the mitochondrial membrane that is then used for ATP synthesis. The sequence is that of Cytochrome b (COB) from Yarrowia lipolytica (strain CLIB 122 / E 150) (Yeast).